Reading from the N-terminus, the 88-residue chain is Small ribosomal subunit protein bS20 (88 aa).

It belongs to the bacterial ribosomal protein bS20 family.

Its function is as follows. Binds directly to 16S ribosomal RNA. This is Small ribosomal subunit protein bS20 from Bartonella tribocorum (strain CIP 105476 / IBS 506).